The sequence spans 157 residues: Large ribosomal subunit protein uL11 (157 aa).

It belongs to the universal ribosomal protein uL11 family. Part of the ribosomal stalk of the 50S ribosomal subunit. Interacts with L10 and the large rRNA to form the base of the stalk. L10 forms an elongated spine to which L12 dimers bind in a sequential fashion forming a multimeric L10(L12)X complex.

Its function is as follows. Forms part of the ribosomal stalk which helps the ribosome interact with GTP-bound translation factors. This chain is Large ribosomal subunit protein uL11, found in Archaeoglobus fulgidus (strain ATCC 49558 / DSM 4304 / JCM 9628 / NBRC 100126 / VC-16).